Reading from the N-terminus, the 205-residue chain is MKNLFYALKEHWQIYVGLLLGLIIGLLVGVGFTDWKSLVRGLDSKVTDWISSLSTLIIMCFTAVGVMSWKKQKTPDLKSKVAKNIIDFDTHAVLLPSKKFQSIDEIKEYNAIQLKIFWDIEHSLSTLYMFDKSNKQEIDTILGYLLKDINSATSLIEKHARYDEVGRYQLVSLINNGYKNTYPNTTKLFELVVGKSNVVGLNGSS.

Helical transmembrane passes span 12–32 (WQIY…GVGF) and 49–69 (WISS…VMSW).

It is found in the host membrane. This is an uncharacterized protein from Haemophilus influenzae (Bacteriophage HP1).